The primary structure comprises 139 residues: Small ribosomal subunit protein uS11 (139 aa).

Residues 118–139 (EDVTPIPHDGTRPKGGRRGRRV) are disordered.

The protein belongs to the universal ribosomal protein uS11 family. As to quaternary structure, part of the 30S ribosomal subunit.

Located on the platform of the 30S subunit. The protein is Small ribosomal subunit protein uS11 of Thermococcus sibiricus (strain DSM 12597 / MM 739).